Here is a 610-residue protein sequence, read N- to C-terminus: UvrABC system protein C (610 aa).

Residues 16–94 (SAPGVYRMYD…IKQYMPKYNV (79 aa)) form the GIY-YIG domain. The region spanning 203–238 (KQVISQLVAKMETAAIDMEYERAAQYRDQITALRRV) is the UVR domain.

This sequence belongs to the UvrC family. In terms of assembly, interacts with UvrB in an incision complex.

It is found in the cytoplasm. The UvrABC repair system catalyzes the recognition and processing of DNA lesions. UvrC both incises the 5' and 3' sides of the lesion. The N-terminal half is responsible for the 3' incision and the C-terminal half is responsible for the 5' incision. The chain is UvrABC system protein C from Shewanella frigidimarina (strain NCIMB 400).